The primary structure comprises 147 residues: Cyanate hydratase (147 aa).

Active-site residues include R88, E91, and S114.

This sequence belongs to the cyanase family.

The catalysed reaction is cyanate + hydrogencarbonate + 3 H(+) = NH4(+) + 2 CO2. Functionally, catalyzes the reaction of cyanate with bicarbonate to produce ammonia and carbon dioxide. This Ralstonia pickettii (strain 12J) protein is Cyanate hydratase.